A 240-amino-acid chain; its full sequence is Ribonuclease HII (240 aa).

The RNase H type-2 domain maps to 29–220 (EPIAGVDEAG…VRRAAGLEPL (192 aa)). The a divalent metal cation site is built by D35, E36, and D129.

The protein belongs to the RNase HII family. The cofactor is Mn(2+). Mg(2+) serves as cofactor.

The protein resides in the cytoplasm. It carries out the reaction Endonucleolytic cleavage to 5'-phosphomonoester.. In terms of biological role, endonuclease that specifically degrades the RNA of RNA-DNA hybrids. This chain is Ribonuclease HII, found in Nocardioides sp. (strain ATCC BAA-499 / JS614).